A 217-amino-acid chain; its full sequence is Protein-L-isoaspartate O-methyltransferase (217 aa).

Ser59 is a catalytic residue.

Belongs to the methyltransferase superfamily. L-isoaspartyl/D-aspartyl protein methyltransferase family.

The protein resides in the cytoplasm. It catalyses the reaction [protein]-L-isoaspartate + S-adenosyl-L-methionine = [protein]-L-isoaspartate alpha-methyl ester + S-adenosyl-L-homocysteine. In terms of biological role, catalyzes the methyl esterification of L-isoaspartyl residues in peptides and proteins that result from spontaneous decomposition of normal L-aspartyl and L-asparaginyl residues. It plays a role in the repair and/or degradation of damaged proteins. This chain is Protein-L-isoaspartate O-methyltransferase (pcm), found in Methanothermobacter thermautotrophicus (strain ATCC 29096 / DSM 1053 / JCM 10044 / NBRC 100330 / Delta H) (Methanobacterium thermoautotrophicum).